A 380-amino-acid polypeptide reads, in one-letter code: MNEEETNFVGIADLPNQRHKIVSRNGVAFTLMLCGESGLGKTTFCNTLFSTTIKSHMGPEKVRAKHAEKTVEIEITKAELEEKNFHLRLTVIDTPGFGDFINNSGCWESVVEFIEDQHESYMRQDQQPDRRKIIDMRIHACLYFLRPVRNGVRPMDLEAMKHISKRVNLIPVIAKADMYTRRDLALYKTRISQVLEYHQVNVYKPNMDEGDPVFHRQIQGIINCMPFAIVGSEDDIRTPDGRVVKGREYPWGIVEIENEEHCDFKQLRNILIRSCMLDLIQTTEEKLYEQYRQEQMKVRQYGEPKLRTIDNAKFKEEEENLRKRFTEQVRVEETRFRQWEQRLIAERDSLNKDLEAQHVQIKQIELEIERLKAATSSRKR.

The 274-residue stretch at 25–298 folds into the Septin-type G domain; sequence NGVAFTLMLC…EQYRQEQMKV (274 aa). The segment at 35-42 is G1 motif; it reads GESGLGKT. GTP contacts are provided by residues 35 to 42, T70, G96, 175 to 183, G231, and R247; these read GESGLGKT and KADMYTRRD. Residues 93–96 form a G3 motif region; the sequence is DTPG. The tract at residues 174–177 is G4 motif; that stretch reads AKAD.

The protein belongs to the TRAFAC class TrmE-Era-EngA-EngB-Septin-like GTPase superfamily. Septin GTPase family. Component of the septin complex composed of two copies of each spn1, spn2, spn3 and spn4.

The protein resides in the cytoplasm. The protein localises to the cell cortex. In terms of biological role, plays a role in the cell cycle. Involved in a late stage of septum formation leading to the separation of the daughter cells. The polypeptide is Septin homolog spn4 (spn4) (Schizosaccharomyces pombe (strain 972 / ATCC 24843) (Fission yeast)).